Here is a 400-residue protein sequence, read N- to C-terminus: Phosphoglycerate kinase (400 aa).

Substrate is bound by residues 20-22, Arg35, 58-61, Arg115, and Arg155; these read DLN and HQGR. Residues Glu330 and 356–359 each bind ATP; that span reads GGDT.

It belongs to the phosphoglycerate kinase family. In terms of assembly, monomer.

It is found in the cytoplasm. It carries out the reaction (2R)-3-phosphoglycerate + ATP = (2R)-3-phospho-glyceroyl phosphate + ADP. It participates in carbohydrate degradation; glycolysis; pyruvate from D-glyceraldehyde 3-phosphate: step 2/5. In Haloarcula marismortui (strain ATCC 43049 / DSM 3752 / JCM 8966 / VKM B-1809) (Halobacterium marismortui), this protein is Phosphoglycerate kinase.